The sequence spans 405 residues: Octaketide synthase 3 (405 aa).

The segment covering 1-10 has biased composition (polar residues); that stretch reads MGSIAESSPL. The segment at 1–22 is disordered; sequence MGSIAESSPLMSRENVEGIRKA. The active site involves C176. CoA is bound by residues S283 and 320 to 323; that span reads GGRA.

Belongs to the thiolase-like superfamily. Chalcone/stilbene synthases family. In terms of assembly, homodimer.

It functions in the pathway secondary metabolite biosynthesis; flavonoid biosynthesis. Catalyzes the iterative condensations of 8 molecules of malonyl-CoA to produce aromatic octaketides, SEK4 and SEK4b, the products of the minimal polyketide synthase for the benzoisochromanequinone actinorhodin. May be involved in the biosynthesis of the octaketide barbaloin. The protein is Octaketide synthase 3 (PKS5) of Aloe arborescens (Kidachi aloe).